The following is a 232-amino-acid chain: uncharacterized protein (232 aa).

The N-terminal stretch at 1–18 is a signal peptide; sequence MGILKSLFTLGKSFISQA. Residues 207–232 are disordered; that stretch reads AEAGIGGSNKSSAQDVLARLQRQQGE.

This sequence belongs to the PspA/Vipp/IM30 family.

This is an uncharacterized protein from Escherichia coli O6:H1 (strain CFT073 / ATCC 700928 / UPEC).